Reading from the N-terminus, the 478-residue chain is ATP synthase subunit beta (478 aa).

164–171 (GGAGVGKT) serves as a coordination point for ATP.

This sequence belongs to the ATPase alpha/beta chains family. In terms of assembly, F-type ATPases have 2 components, CF(1) - the catalytic core - and CF(0) - the membrane proton channel. CF(1) has five subunits: alpha(3), beta(3), gamma(1), delta(1), epsilon(1). CF(0) has three main subunits: a(1), b(2) and c(9-12). The alpha and beta chains form an alternating ring which encloses part of the gamma chain. CF(1) is attached to CF(0) by a central stalk formed by the gamma and epsilon chains, while a peripheral stalk is formed by the delta and b chains.

The protein localises to the cell membrane. It carries out the reaction ATP + H2O + 4 H(+)(in) = ADP + phosphate + 5 H(+)(out). In terms of biological role, produces ATP from ADP in the presence of a proton gradient across the membrane. The catalytic sites are hosted primarily by the beta subunits. In Corynebacterium kroppenstedtii (strain DSM 44385 / JCM 11950 / CIP 105744 / CCUG 35717), this protein is ATP synthase subunit beta.